A 205-amino-acid chain; its full sequence is Methylamine utilization protein MauD (205 aa).

A helical transmembrane segment spans residues 5-25 (IMIASNVLLWGAFLALAALML). Residues 50-184 (PDIGERSPVF…VESLFETTRV (135 aa)) enclose the Thioredoxin domain.

The protein resides in the membrane. Its pathway is one-carbon metabolism; methylamine degradation. Its function is as follows. May be specifically involved in the processing, transport, and/or maturation of the MADH beta-subunit. The protein is Methylamine utilization protein MauD (mauD) of Methylobacillus flagellatus (strain ATCC 51484 / DSM 6875 / VKM B-1610 / KT).